The primary structure comprises 231 residues: Large ribosomal subunit protein uL1 (231 aa).

Belongs to the universal ribosomal protein uL1 family. Part of the 50S ribosomal subunit.

In terms of biological role, binds directly to 23S rRNA. The L1 stalk is quite mobile in the ribosome, and is involved in E site tRNA release. Its function is as follows. Protein L1 is also a translational repressor protein, it controls the translation of the L11 operon by binding to its mRNA. The protein is Large ribosomal subunit protein uL1 of Nitrosococcus oceani (strain ATCC 19707 / BCRC 17464 / JCM 30415 / NCIMB 11848 / C-107).